The chain runs to 644 residues: Leucine-rich repeat protein soc-2 homolog (644 aa).

Positions 1–19 are enriched in low complexity; the sequence is MNLCSSGATASTTSLSSTG. 2 disordered regions span residues 1–60 and 82–150; these read MNLC…APTL and NSPA…IQAD. Gly residues-rich tracts occupy residues 26-50 and 87-96; these read GVPGGGAEGGGGDGGSGNSGGGGKA and GAGGASGFTG. The span at 99–117 shows a compositional bias: polar residues; that stretch reads QQPTGSNGHSHLHNENNAN. LRR repeat units lie at residues 164 to 185, 187 to 208, 210 to 231, 233 to 254, 256 to 277, 279 to 300, 302 to 323, 325 to 346, 348 to 370, 371 to 392, 395 to 416, 419 to 440, 443 to 464, 466 to 487, 489 to 510, 512 to 533, 535 to 556, 558 to 579, 581 to 603, and 605 to 626; these read GIKRLDLSKSSITVIPSTVKEC, HLTELYLYSNKIGQLPPEIGCL, SLRNLALNENSLTSLPESLQNC, QLKVLDLRHNKLAEIPPVIYRL, SLTTLYLRFNRITAVADDLRQL, NLTMLSLRENKIRELGSAIGAL, NLTTLDVSHNHLEHLPEDIGNC, NLSALDLQHNELLDIPDSIGNL, SLVRLGMRYNRLNSVPATLKNCK, SMDEFNVEGNGITQLPDGMLAS, GLTTITLSRNQFASYPTGGPAQ, NVYSINLEHNRIDKIPYGIFSR, GLTKLNMKENMLTALPLDIGTW, NMVELNLATNALQKLPDDIMNL, NLEILILSNNMLKKIPNTIGNL, RLRILDLEENRIEVLPHEIGLL, ELQRLILQTNQITMLPRSIGHL, NLTHLSVSENNLQFLPEEIGSL, SLENLYINQNPGLEKLPFELALC, and NLKYLNIDKCPLSTIPPEIQAG.

The protein belongs to the SHOC2 family.

Its function is as follows. Acts as a Ras effector and participates in MAPK pathway activation. Probably acts as a regulatory subunit of protein phosphatase that specifically dephosphorylates Raf kinase and stimulate Raf activity at specialized signaling complexes upon Ras activation. This chain is Leucine-rich repeat protein soc-2 homolog (Sur-8), found in Drosophila erecta (Fruit fly).